Consider the following 769-residue polypeptide: P-selectin (769 aa).

Positions 1 to 32 are cleaved as a signal peptide; it reads MASCPKAIWSWRFQRVVFRSVQLLCFSILIFE. At 33–717 the chain is on the extracellular side; it reads LMTQKEVSAW…QEALTYIGGA (685 aa). Residues Asn-54 and Asn-80 are each glycosylated (N-linked (GlcNAc...) asparagine). One can recognise a C-type lectin domain in the interval 58 to 158; it reads AFCQKYYTDL…PCGKRKRALC (101 aa). 21 cysteine pairs are disulfide-bonded: Cys-60–Cys-158, Cys-131–Cys-150, Cys-163–Cys-174, Cys-168–Cys-183, Cys-185–Cys-194, Cys-200–Cys-244, Cys-230–Cys-257, Cys-262–Cys-306, Cys-292–Cys-319, Cys-324–Cys-368, Cys-354–Cys-381, Cys-386–Cys-430, Cys-416–Cys-443, Cys-448–Cys-492, Cys-478–Cys-505, Cys-510–Cys-554, Cys-540–Cys-567, Cys-581–Cys-625, Cys-611–Cys-638, Cys-643–Cys-687, and Cys-673–Cys-700. Ca(2+) contacts are provided by Glu-121, Asn-123, and Asn-124. Asn-123 is a binding site for a carbohydrate. 2 residues coordinate a carbohydrate: Glu-133 and Asn-146. Ca(2+) is bound by residues Asn-146 and Asp-147. An EGF-like domain is found at 159 to 195; it reads YRASCQDMSCSKQGECIETIGNYTCSCYPGFYGPECE. N-linked (GlcNAc...) asparagine glycosylation is present at Asn-180. Sushi domains follow at residues 198 to 259, 260 to 321, 322 to 383, 384 to 445, 446 to 507, 508 to 569, 579 to 640, and 641 to 702; these read RECG…QCVA, VQCP…VCKA, IACE…VCQA, LQCQ…ECQA, VTCA…TCEA, SKCP…SCKV, LRCP…TCRA, and VKCS…TCQA. Asn-212 and Asn-219 each carry an N-linked (GlcNAc...) asparagine glycan. A glycan (N-linked (GlcNAc...) asparagine) is linked at Asn-347. Asn-398 carries N-linked (GlcNAc...) asparagine glycosylation. Asn-604 carries an N-linked (GlcNAc...) asparagine glycan. N-linked (GlcNAc...) asparagine glycosylation is found at Asn-655, Asn-662, and Asn-680. A helical membrane pass occupies residues 718-734; sequence AAGTTGLVTSSILLALL. The Cytoplasmic portion of the chain corresponds to 735 to 769; the sequence is RRRRRQKDDGKSPLNPQSHLGTYGVFTNAAFDPSP. Residues 740 to 769 are disordered; sequence QKDDGKSPLNPQSHLGTYGVFTNAAFDPSP. An Endocytosis signal motif is present at residues 757–760; that stretch reads YGVF. The interaction with SNX17 stretch occupies residues 760–769; sequence FTNAAFDPSP.

This sequence belongs to the selectin/LECAM family. As to quaternary structure, interacts with SNX17. Interacts with SELPLG/PSGL1 and PODXL2 and mediates neutrophil adhesion and leukocyte rolling. This interaction requires the sialyl-Lewis X epitope of SELPLG and PODXL2, and specific tyrosine sulfation on SELPLG. Interacts (via C-type lectin domain) with alpha-IIb/beta3 integrin ITGA2B:ITGB3 and alpha-V/beta-3 integrin ITGAV:ITGB3. Interacts with alpha5/beta1 integrin ITGA5:ITGB1 and alpha4/beta1 integrin ITGA4:ITGB.

It is found in the cell membrane. Functionally, ca(2+)-dependent receptor for myeloid cells that binds to carbohydrates on neutrophils and monocytes. Mediates the interaction of activated endothelial cells or platelets with leukocytes. The ligand recognized is sialyl-Lewis X. Mediates rapid rolling of leukocyte rolling over vascular surfaces during the initial steps in inflammation through interaction with SELPLG. Mediates cell-cell interactions and cell adhesion via the interaction with integrin alpha-IIb/beta3 (ITGA2B:ITGB3) and integrin alpha-V/beta-3 (ITGAV:ITGB3). The sequence is that of P-selectin (SELP) from Ovis aries (Sheep).